We begin with the raw amino-acid sequence, 283 residues long: Flagellar filament 35 kDa core protein (283 aa).

It belongs to the bacterial flagellin family. As to quaternary structure, the flagellum consists of two outer layers around a core that contains several antigenically related polypeptides.

Its subcellular location is the periplasmic flagellum. It localises to the periplasm. Functionally, component of the core of the flagella. The protein is Flagellar filament 35 kDa core protein (flaB) of Leptospira interrogans serogroup Icterohaemorrhagiae serovar copenhageni (strain Fiocruz L1-130).